The sequence spans 434 residues: Protein TolB homolog (434 aa).

Residues 1 to 27 (MRSTRNSFACLCIMLFGMLFVPFTLRA) form the signal peptide. Positions 413-434 (SNQRPLLNMQGEQQQPSWSVSK) are disordered.

This sequence belongs to the TolB family.

It is found in the periplasm. The protein is Protein TolB homolog of Chlorobaculum tepidum (strain ATCC 49652 / DSM 12025 / NBRC 103806 / TLS) (Chlorobium tepidum).